We begin with the raw amino-acid sequence, 711 residues long: DNA ligase (711 aa).

Residues 1–21 are disordered; that stretch reads MNATHRGAQADASAPAGGLPP. The span at 10-21 shows a compositional bias: low complexity; sequence ADASAPAGGLPP. NAD(+) is bound by residues 52–56, 101–102, and glutamate 146; these read DAEYD and SL. The active-site N6-AMP-lysine intermediate is the lysine 148. Positions 169, 205, 322, and 346 each coordinate NAD(+). Cysteine 440, cysteine 443, cysteine 458, and cysteine 464 together coordinate Zn(2+). In terms of domain architecture, BRCT spans 623 to 711; that stretch reads RAPAPLAGKT…VGAGQPGEQS (89 aa).

The protein belongs to the NAD-dependent DNA ligase family. LigA subfamily. It depends on Mg(2+) as a cofactor. The cofactor is Mn(2+).

It carries out the reaction NAD(+) + (deoxyribonucleotide)n-3'-hydroxyl + 5'-phospho-(deoxyribonucleotide)m = (deoxyribonucleotide)n+m + AMP + beta-nicotinamide D-nucleotide.. Its function is as follows. DNA ligase that catalyzes the formation of phosphodiester linkages between 5'-phosphoryl and 3'-hydroxyl groups in double-stranded DNA using NAD as a coenzyme and as the energy source for the reaction. It is essential for DNA replication and repair of damaged DNA. This Cupriavidus pinatubonensis (strain JMP 134 / LMG 1197) (Cupriavidus necator (strain JMP 134)) protein is DNA ligase.